The primary structure comprises 193 residues: MLQITNMATPFLLLLLPLIFSTVLLLTITVTQSKPYSKTTPFQGNKPDKLTHLHFYFHDIISGDKPTTIRVAEAPGTNSSATVFGAVLIVDAPVTEGPELSSKEVGRAQGLYASTDMKTFGFTMVFNFVFTEGEFNGSTAALYGRNPILLEERELPIIGGTGDFRFARGYALPKTYKVVNIDAVVEYNVFIWH.

The signal sequence occupies residues 1–33; that stretch reads MLQITNMATPFLLLLLPLIFSTVLLLTITVTQS. Residues Asn-78 and Asn-136 are each glycosylated (N-linked (GlcNAc...) asparagine).

The protein belongs to the plant dirigent protein family. As to quaternary structure, homodimer.

The protein resides in the secreted. It is found in the extracellular space. The protein localises to the apoplast. Its function is as follows. Dirigent proteins impart stereoselectivity on the phenoxy radical-coupling reaction, yielding optically active lignans from two molecules of coniferyl alcohol in the biosynthesis of lignans, flavonolignans, and alkaloids and thus plays a central role in plant secondary metabolism. The protein is Dirigent protein 11 (DIR11) of Arabidopsis thaliana (Mouse-ear cress).